The following is a 124-amino-acid chain: p53-regulated apoptosis-inducing protein 1 (124 aa).

Residues methionine 1–cysteine 16 are compositionally biased toward polar residues. A disordered region spans residues methionine 1 to glycine 46.

As to expression, only found to be expressed in thymus.

The protein localises to the mitochondrion. Functionally, may play an important role in mediating p53/TP53-dependent apoptosis. This chain is p53-regulated apoptosis-inducing protein 1 (TP53AIP1), found in Homo sapiens (Human).